A 478-amino-acid chain; its full sequence is Patatin-like phospholipase domain-containing protein 2 (478 aa).

Residues 1–8 (MFPRETKW) lie on the Cytoplasmic side of the membrane. The helical transmembrane segment at 9 to 29 (NISFAGCGFLGVYHIGVASCL) threads the bilayer. Residues 10 to 179 (ISFAGCGFLG…SDNLPLYELK (170 aa)) enclose the PNPLA domain. A GXGXXG motif is present at residues 14–19 (GCGFLG). The Extracellular portion of the chain corresponds to 30-42 (REHAPFLVANATH). An N-linked (GlcNAc...) asparagine glycan is attached at Asn39. A helical transmembrane segment spans residues 43–63 (IYGASAGALTATALVTGACLG). The short motif at 45-49 (GASAG) is the GXSXG element. The active-site Nucleophile is the Ser47. Residues 64–137 (EAGANIIEVS…IISHFSSKDE (74 aa)) are Cytoplasmic-facing. Lys92 is covalently cross-linked (Glycyl lysine isopeptide (Lys-Gly) (interchain with G-Cter in ubiquitin)). Residues 138 to 158 (LIQANVCSTFIPVYCGLIPPT) form a helical membrane-spanning segment. Residues 159–323 (LQGVRYVDGG…TTLSNMLPVR (165 aa)) are Extracellular-facing. Asp166 (proton acceptor) is an active-site residue. Residues 166-168 (DGG) carry the DGA/G motif. Residues 324–344 (LATAMMVPYTLPLESAVSFTI) traverse the membrane as a helical segment. The Cytoplasmic portion of the chain corresponds to 345–478 (RLLEWLPDVP…PQDPSGLPPC (134 aa)). The residue at position 366 (Ser366) is a Phosphoserine; in vitro. Phosphoserine; by PKA is present on Ser388. 2 positions are modified to phosphoserine: Ser398 and Ser422. Residues 456–478 (RAPASPTATDPATPQDPSGLPPC) are disordered. Residues 457–478 (APASPTATDPATPQDPSGLPPC) show a composition bias toward low complexity. Ser460 carries the phosphoserine; in vitro modification.

In terms of assembly, interacts with ABHD5; this association stimulates PNPLA2 triglyceride hydrolase activity. Interacts with SERPINF1; this interaction stimulates the phospholipase A2 activity of PNPLA2. Despite a colocalization in lipid droplets, it probably does not interact with PLIN. Interacts with PLIN5; prevents interaction with ABHD5. Interacts with FAF2. In terms of processing, phosphorylation at Ser-398 by PKA is increased during fasting and moderate intensity exercise, and moderately increases lipolytic activity. Ubiquitinated by PEX2 in response to reactive oxygen species (ROS), leading to its degradation. Ubiquitination is stimulated by LDAH.

The protein resides in the lipid droplet. It is found in the cell membrane. Its subcellular location is the cytoplasm. It carries out the reaction a triacylglycerol + H2O = a diacylglycerol + a fatty acid + H(+). It catalyses the reaction a triacylglycerol + H2O = a 1,2-diacylglycerol + a fatty acid + H(+). The catalysed reaction is a triacylglycerol + H2O = a 1,3-diacylglycerol + a fatty acid + H(+). The enzyme catalyses a triacyl-sn-glycerol + H2O = a 1,3-diacyl-sn-glycerol + a fatty acid + H(+). It carries out the reaction a triacyl-sn-glycerol + H2O = a 2,3-diacyl-sn-glycerol + a fatty acid + H(+). It catalyses the reaction a 1-acylglycerol + a 1,3-diacylglycerol = a triacylglycerol + glycerol. The catalysed reaction is a 1-acylglycerol + a 1,2-diacylglycerol = a triacylglycerol + glycerol. The enzyme catalyses 2 a 1-acylglycerol = a 1,2-diacylglycerol + glycerol. It carries out the reaction a triacylglycerol + all-trans-retinol = an all-trans-retinyl ester + a diacylglycerol. It catalyses the reaction 1,2-di-(9Z-octadecenoyl)-glycerol + (9Z)-octadecenoate + H(+) = 1,2,3-tri-(9Z-octadecenoyl)-glycerol + H2O. The catalysed reaction is 1,2,3-tri-(9Z-octadecenoyl)-glycerol + H2O = 1,3-di-(9Z-octadecenoyl)-glycerol + (9Z)-octadecenoate + H(+). The enzyme catalyses 1-(9Z-octadecenoyl)-glycerol + 1,3-di-(9Z-octadecenoyl)-glycerol = 1,2,3-tri-(9Z-octadecenoyl)-glycerol + glycerol. It carries out the reaction 1-(9Z-octadecenoyl)-glycerol + 1,2-di-(9Z-octadecenoyl)-glycerol = 1,2,3-tri-(9Z-octadecenoyl)-glycerol + glycerol. It catalyses the reaction 2 1-(9Z-octadecenoyl)-glycerol = 1,2-di-(9Z-octadecenoyl)-glycerol + glycerol. The catalysed reaction is 1,2,3-tri-(9Z-octadecenoyl)-glycerol + all-trans-retinol = all-trans-retinyl 9Z-octadecenoate + di-(9Z)-octadecenoylglycerol. The enzyme catalyses 1,2,3-tri-(9Z)-hexadecenoylglycerol + H2O = 1,3-di-(9Z)-hexadecenoylglycerol + (9Z)-hexadecenoate + H(+). It carries out the reaction 1,2,3-tri-(9Z,12Z)-octadecadienoylglycerol + H2O = 1,3-di-(9Z,12Z)-octadecadienoylglycerol + (9Z,12Z)-octadecadienoate + H(+). It catalyses the reaction 1,2,3-tri-(9Z,12Z,15Z)-octadecatrienoylglycerol + H2O = 1,3-di-(9Z,12Z,15Z)-octadecatrienoylglycerol + (9Z,12Z,15Z)-octadecatrienoate + H(+). The catalysed reaction is 1,3-di-(9Z)-octadecenoyl-2-hexadecanoylglycerol + H2O = 1,3-di-(9Z-octadecenoyl)-glycerol + hexadecanoate + H(+). The enzyme catalyses 1,2-di-(9Z)-octadecenoyl-3-hexadecanoyl-sn-glycerol + H2O = 1-(9Z)-octadecenoyl-3-hexadecanoyl-sn-glycerol + (9Z)-octadecenoate + H(+). It carries out the reaction 1-hexadecanoyl-2,3-di-(9Z)-octadecenoyl-sn-glycerol + H2O = 1-hexadecanoyl-3-(9Z)-octadecenoyl-sn-glycerol + (9Z)-octadecenoate + H(+). It catalyses the reaction 1,2,3-tri-(9Z-octadecenoyl)-glycerol + H2O = 2,3-di-(9Z)-octadecenoyl-sn-glycerol + (9Z)-octadecenoate + H(+). The catalysed reaction is 1,2,3-tri-(9Z)-hexadecenoylglycerol + H2O = 2,3-di-(9Z)-hexadecenoyl-sn-glycerol + (9Z)-hexadecenoate + H(+). The enzyme catalyses 1,2,3-tri-(9Z,12Z)-octadecadienoylglycerol + H2O = 2,3-di-(9Z,12Z)-octadecadienoyl-sn-glycerol + (9Z,12Z)-octadecadienoate + H(+). It carries out the reaction 1,2,3-tri-(9Z,12Z,15Z)-octadecatrienoylglycerol + H2O = 2,3-di-(9Z,12Z,15Z)-octadecatrienoyl-sn-glycerol + (9Z,12Z,15Z)-octadecatrienoate + H(+). It catalyses the reaction 1,3-di-(9Z)-octadecenoyl-2-hexadecanoylglycerol + H2O = 2-hexadecanoyl-3-(9Z)-octadecenoyl-sn-glycerol + (9Z)-octadecenoate + H(+). The catalysed reaction is 1-hexadecanoyl-2,3-di-(9Z)-octadecenoyl-sn-glycerol + H2O = 2,3-di-(9Z)-octadecenoyl-sn-glycerol + hexadecanoate + H(+). The enzyme catalyses 1,2-di-(9Z)-octadecenoyl-3-hexadecanoyl-sn-glycerol + H2O = 2-(9Z-octadecenoyl)-3-hexadecanoyl-sn-glycerol + (9Z)-octadecenoate + H(+). It carries out the reaction a 1,2-diacyl-sn-glycero-3-phosphocholine + H2O = a 1-acyl-sn-glycero-3-phosphocholine + a fatty acid + H(+). It catalyses the reaction 1,2,3-tri-(9Z-octadecenoyl)-glycerol + 9-hydroxy-octadecanoate = 9-(9Z-octadecenoyloxy)-octadecanoate + 2,3-di-(9Z)-octadecenoyl-sn-glycerol. The catalysed reaction is 1-hexadecanoyl-2,3-di-(9Z)-octadecenoyl-sn-glycerol + 9-hydroxy-octadecanoate = 9-hexadecanoyloxy-octadecanoate + 2,3-di-(9Z)-octadecenoyl-sn-glycerol. The enzyme catalyses 1,2,3-tri-(10Z)-heptadecenoylglycerol + 9-hydroxy-octadecanoate = 2,3-di-(10Z-heptadecenoyl)-sn-glycerol + 9-(10Z-heptadecenoyloxy)-octadecanoate. It carries out the reaction 1,2,3-tri-(9Z,12Z)-octadecadienoylglycerol + 9-hydroxy-octadecanoate = 2,3-di-(9Z,12Z)-octadecadienoyl-sn-glycerol + 9-(9Z,12Z-octadecadienoyloxy)-octadecanoate. It catalyses the reaction 1,2,3-tri-(9Z)-hexadecenoylglycerol + 9-hydroxy-octadecanoate = 2,3-di-(9Z)-hexadecenoyl-sn-glycerol + 9-(9Z-hexadecenoyloxy)-octadecanoate. The catalysed reaction is 9-hydroxy-octadecanoate + 1,2-di-(9Z-octadecenoyl)-sn-glycerol = 9-(9Z-octadecenoyloxy)-octadecanoate + 2-(9Z-octadecenoyl)-glycerol. The enzyme catalyses 1-hexadecanoyl-2,3-di-(9Z)-octadecenoyl-sn-glycerol + 9-hydroxy-octadecanoate = 1-hexadecanoyl-3-(9Z)-octadecenoyl-sn-glycerol + 9-(9Z-octadecenoyloxy)-octadecanoate. Its pathway is glycerolipid metabolism; triacylglycerol degradation. In terms of biological role, catalyzes the initial step in triglyceride hydrolysis in adipocyte and non-adipocyte lipid droplets. Exhibits a strong preference for the hydrolysis of long-chain fatty acid esters at the sn-2 position of the glycerol backbone and acts coordinately with LIPE/HLS and DGAT2 within the lipolytic cascade. Also possesses acylglycerol transacylase and phospholipase A2 activities. Transfers fatty acid from triglyceride to retinol, hydrolyzes retinylesters, and generates 1,3-diacylglycerol from triglycerides. Regulates adiposome size and may be involved in the degradation of adiposomes. Catalyzes the formation of an ester bond between hydroxy fatty acids and fatty acids derived from triglycerides or diglycerides to generate fatty acid esters of hydroxy fatty acids (FAHFAs) in adipocytes. Acts antagonistically with LDAH in regulation of cellular lipid stores. Inhibits LDAH-stimulated lipid droplet fusion. May play an important role in energy homeostasis. May play a role in the response of the organism to starvation, enhancing hydrolysis of triglycerides and providing free fatty acids to other tissues to be oxidized in situations of energy depletion. The protein is Patatin-like phospholipase domain-containing protein 2 of Rattus norvegicus (Rat).